The chain runs to 235 residues: Probable pyridoxal 5'-phosphate synthase subunit PDX1 (235 aa).

Lysine 16 acts as the Schiff-base intermediate with D-ribose 5-phosphate in catalysis. Arginine 104 lines the D-glyceraldehyde 3-phosphate pocket. D-ribose 5-phosphate is bound by residues glycine 153 and 174 to 175 (GS).

This sequence belongs to the PdxS/SNZ family.

It catalyses the reaction aldehydo-D-ribose 5-phosphate + D-glyceraldehyde 3-phosphate + L-glutamine = pyridoxal 5'-phosphate + L-glutamate + phosphate + 3 H2O + H(+). It participates in cofactor biosynthesis; pyridoxal 5'-phosphate biosynthesis. Its function is as follows. Catalyzes the formation of pyridoxal 5'-phosphate from ribose 5-phosphate (RBP), glyceraldehyde 3-phosphate (G3P) and ammonia. The ammonia is provided by PDX2. Can also use ribulose 5-phosphate and dihydroxyacetone phosphate as substrates, resulting from enzyme-catalyzed isomerization of RBP and G3P, respectively. Also plays an indirect role in resistance to singlet oxygen-generating photosensitizers. The polypeptide is Probable pyridoxal 5'-phosphate synthase subunit PDX1 (Stellaria longipes (Longstalk starwort)).